Here is a 281-residue protein sequence, read N- to C-terminus: ATP phosphoribosyltransferase (281 aa).

It belongs to the ATP phosphoribosyltransferase family. Long subfamily. The cofactor is Mg(2+).

Its subcellular location is the cytoplasm. It carries out the reaction 1-(5-phospho-beta-D-ribosyl)-ATP + diphosphate = 5-phospho-alpha-D-ribose 1-diphosphate + ATP. It participates in amino-acid biosynthesis; L-histidine biosynthesis; L-histidine from 5-phospho-alpha-D-ribose 1-diphosphate: step 1/9. Feedback inhibited by histidine. Functionally, catalyzes the condensation of ATP and 5-phosphoribose 1-diphosphate to form N'-(5'-phosphoribosyl)-ATP (PR-ATP). Has a crucial role in the pathway because the rate of histidine biosynthesis seems to be controlled primarily by regulation of HisG enzymatic activity. In Corynebacterium glutamicum (strain R), this protein is ATP phosphoribosyltransferase.